We begin with the raw amino-acid sequence, 1273 residues long: Probable methionine synthase (1273 aa).

Residues 7–327 enclose the Hcy-binding domain; sequence FKELADIAKE…DHINAMYKAV (321 aa). 3 residues coordinate Zn(2+): Cys-249, Cys-312, and Cys-313. The 262-residue stretch at 360 to 621 folds into the Pterin-binding domain; it reads FVNIGERCNV…IDKPLLQLLE (262 aa). The region spanning 652 to 749 is the B12-binding N-terminal domain; sequence KTDEWRNTSV…FMDAERQANI (98 aa). Residues Glu-699, 772 to 776, His-775, Ser-820, Thr-824, and Ala-876 each bind methylcob(III)alamin; that span reads GDVHD. The region spanning 762 to 897 is the B12-binding domain; sequence QGTVVIATVK…DMTVRDAFLQ (136 aa). One can recognise an AdoMet activation domain in the interval 927–1273; that stretch reads SLKDRRFVAL…LSPIIGYELD (347 aa). S-adenosyl-L-methionine is bound by residues Asp-977, Arg-1171, and 1225-1226; that span reads YF.

Belongs to the vitamin-B12 dependent methionine synthase family. Methylcob(III)alamin serves as cofactor. It depends on Zn(2+) as a cofactor.

The catalysed reaction is (6S)-5-methyl-5,6,7,8-tetrahydrofolate + L-homocysteine = (6S)-5,6,7,8-tetrahydrofolate + L-methionine. It participates in amino-acid biosynthesis; L-methionine biosynthesis via de novo pathway; L-methionine from L-homocysteine (MetH route): step 1/1. Catalyzes the transfer of a methyl group from methyl-cobalamin to homocysteine, yielding enzyme-bound cob(I)alamin and methionine. Subsequently, remethylates the cofactor using methyltetrahydrofolate. The polypeptide is Probable methionine synthase (metr-1) (Caenorhabditis briggsae).